Reading from the N-terminus, the 352-residue chain is Ribosomal RNA large subunit methyltransferase M (352 aa).

S-adenosyl-L-methionine contacts are provided by residues Ser-184, 217–220 (APGG), Asp-236, Asp-256, and Asp-272. The active-site Proton acceptor is Lys-301.

Belongs to the class I-like SAM-binding methyltransferase superfamily. RNA methyltransferase RlmE family. RlmM subfamily. In terms of assembly, monomer.

Its subcellular location is the cytoplasm. It carries out the reaction cytidine(2498) in 23S rRNA + S-adenosyl-L-methionine = 2'-O-methylcytidine(2498) in 23S rRNA + S-adenosyl-L-homocysteine + H(+). Its function is as follows. Catalyzes the 2'-O-methylation at nucleotide C2498 in 23S rRNA. The sequence is that of Ribosomal RNA large subunit methyltransferase M from Pseudomonas paraeruginosa (strain DSM 24068 / PA7) (Pseudomonas aeruginosa (strain PA7)).